Consider the following 608-residue polypeptide: Isocitrate dehydrogenase kinase/phosphatase (608 aa).

ATP contacts are provided by residues 327–333 and Lys-348; that span reads APGIKGL. Asp-383 is an active-site residue.

This sequence belongs to the AceK family.

It localises to the cytoplasm. The catalysed reaction is L-seryl-[isocitrate dehydrogenase] + ATP = O-phospho-L-seryl-[isocitrate dehydrogenase] + ADP + H(+). Bifunctional enzyme which can phosphorylate or dephosphorylate isocitrate dehydrogenase (IDH) on a specific serine residue. This is a regulatory mechanism which enables bacteria to bypass the Krebs cycle via the glyoxylate shunt in response to the source of carbon. When bacteria are grown on glucose, IDH is fully active and unphosphorylated, but when grown on acetate or ethanol, the activity of IDH declines drastically concomitant with its phosphorylation. The protein is Isocitrate dehydrogenase kinase/phosphatase of Burkholderia ambifaria (strain ATCC BAA-244 / DSM 16087 / CCUG 44356 / LMG 19182 / AMMD) (Burkholderia cepacia (strain AMMD)).